The following is a 190-amino-acid chain: Threonylcarbamoyl-AMP synthase (190 aa).

A YrdC-like domain is found at 7–190 (LSSLIKCIRK…IVNGKLIRYV (184 aa)).

It belongs to the SUA5 family. TsaC subfamily.

It is found in the cytoplasm. The catalysed reaction is L-threonine + hydrogencarbonate + ATP = L-threonylcarbamoyladenylate + diphosphate + H2O. In terms of biological role, required for the formation of a threonylcarbamoyl group on adenosine at position 37 (t(6)A37) in tRNAs that read codons beginning with adenine. Catalyzes the conversion of L-threonine, HCO(3)(-)/CO(2) and ATP to give threonylcarbamoyl-AMP (TC-AMP) as the acyladenylate intermediate, with the release of diphosphate. The polypeptide is Threonylcarbamoyl-AMP synthase (Buchnera aphidicola subsp. Schizaphis graminum (strain Sg)).